The primary structure comprises 379 residues: 8-amino-7-oxononanoate synthase (379 aa).

Residues arginine 27 and arginine 34 each contribute to the substrate site. Residue 114–115 participates in pyridoxal 5'-phosphate binding; sequence GY. Residue histidine 139 coordinates substrate. Pyridoxal 5'-phosphate contacts are provided by residues serine 187, 212–215, and 232–235; these read DDAH and TLSK. Position 235 is an N6-(pyridoxal phosphate)lysine (lysine 235). A substrate-binding site is contributed by threonine 344.

This sequence belongs to the class-II pyridoxal-phosphate-dependent aminotransferase family. BioF subfamily. Homodimer. The cofactor is pyridoxal 5'-phosphate.

It carries out the reaction 6-carboxyhexanoyl-[ACP] + L-alanine + H(+) = (8S)-8-amino-7-oxononanoate + holo-[ACP] + CO2. Its pathway is cofactor biosynthesis; biotin biosynthesis. Its function is as follows. Catalyzes the decarboxylative condensation of pimeloyl-[acyl-carrier protein] and L-alanine to produce 8-amino-7-oxononanoate (AON), [acyl-carrier protein], and carbon dioxide. This chain is 8-amino-7-oxononanoate synthase, found in Methylobacterium sp. (strain 4-46).